The sequence spans 243 residues: Pyridoxine 5'-phosphate synthase (243 aa).

Residue Asn-9 participates in 3-amino-2-oxopropyl phosphate binding. 11 to 12 (DH) contributes to the 1-deoxy-D-xylulose 5-phosphate binding site. 3-amino-2-oxopropyl phosphate is bound at residue Arg-20. The active-site Proton acceptor is His-45. Residues Arg-47 and His-52 each coordinate 1-deoxy-D-xylulose 5-phosphate. Residue Glu-72 is the Proton acceptor of the active site. Position 102 (Thr-102) interacts with 1-deoxy-D-xylulose 5-phosphate. His-193 serves as the catalytic Proton donor. 3-amino-2-oxopropyl phosphate is bound by residues Gly-194 and 215-216 (GH).

It belongs to the PNP synthase family. As to quaternary structure, homooctamer; tetramer of dimers.

It localises to the cytoplasm. It carries out the reaction 3-amino-2-oxopropyl phosphate + 1-deoxy-D-xylulose 5-phosphate = pyridoxine 5'-phosphate + phosphate + 2 H2O + H(+). It functions in the pathway cofactor biosynthesis; pyridoxine 5'-phosphate biosynthesis; pyridoxine 5'-phosphate from D-erythrose 4-phosphate: step 5/5. Functionally, catalyzes the complicated ring closure reaction between the two acyclic compounds 1-deoxy-D-xylulose-5-phosphate (DXP) and 3-amino-2-oxopropyl phosphate (1-amino-acetone-3-phosphate or AAP) to form pyridoxine 5'-phosphate (PNP) and inorganic phosphate. This chain is Pyridoxine 5'-phosphate synthase, found in Pseudoalteromonas translucida (strain TAC 125).